We begin with the raw amino-acid sequence, 180 residues long: MTETSTVSIASSAIVCVEADIKGEVIIKEGCVVHPFVVFDATKGPIYVGENNIFEEYAVIRNNSDGQPMIIGDWNIFQVHSKSSAKYVGSRNVIGVHAVLEDGCSVSDDCSVGAKCTVFSHQNLEPSVSVYAATNLSRTTKTPNMTSPHQIEFLRKILPSYHHLYGKKKAVATASASAAQ.

Belongs to the dynactin subunits 5/6 family. Dynactin subunit 6 subfamily. As to quaternary structure, subunit of dynactin, a multiprotein complex part of a tripartite complex with dynein and a adapter, such as BICDL1, BICD2 or HOOK3. The dynactin complex is built around ACTR1A/ACTB filament and consists of an actin-related filament composed of a shoulder domain, a pointed end and a barbed end.

Its subcellular location is the cytoplasm. The protein localises to the cytoskeleton. Functionally, part of the dynactin complex that activates the molecular motor dynein for ultra-processive transport along microtubules. In Caenorhabditis elegans, this protein is Dynactin subunit 6 (dnc-6).